The following is a 523-amino-acid chain: Chitinase Chi52 (523 aa).

An N-terminal signal peptide occupies residues 1 to 30 (MNQAVRFRPVITFALAFLLLITWFAPRADA). The interval 80 to 101 (GSGGETPTPDTAPPSVPAGLTS) is disordered. Residues 95–180 (VPAGLTSSSI…TSLSVTTSNG (86 aa)) enclose the Fibronectin type-III domain. The 324-residue stretch at 190–513 (KWLIGYWHNF…SAHRPFLNGL (324 aa)) folds into the GH18 domain. The active-site Proton donor is the glutamate 302.

It belongs to the glycosyl hydrolase 18 family. Chitinase class II subfamily.

The catalysed reaction is Random endo-hydrolysis of N-acetyl-beta-D-glucosaminide (1-&gt;4)-beta-linkages in chitin and chitodextrins.. Activity is inhibited by Cu(2+) and Co(2+), and almost completely inhibited by SDS. Acidic chitinase that displays a broad substrate specificity, showing the highest specific activity toward colloidal chitin, followed by ethylene glycol chitin and ball milled chitin, but exhibits no activity toward powdery chitin and chitosan. Hydrolyzes colloidal chitin and chitooligosaccharides with degree of polymerization 2-5 to release mainly N-acetyl chitobiose. Displays inhibition effects on the growth of some phytopathogenic fungi, including Alternaria alstroemeriae, Botrytis cinerea, Rhizoctonia solani, Sclerotinia sclerotiorum and Valsa mali. This Paenibacillus xylanexedens protein is Chitinase Chi52.